The following is a 752-amino-acid chain: Protein GCN20 (752 aa).

At alanine 2 the chain carries N-acetylalanine. ABC transporter domains are found at residues 199-464 (IHID…RKNA) and 532-748 (IQLQ…AAGV). Residues 232-239 (GQNGIGKS) and 565-572 (GANGCGKT) contribute to the ATP site.

Belongs to the ABC transporter superfamily. ABCF family. EF3 subfamily. As to quaternary structure, interacts (via N-terminus) with GCN1 (via C-terminus); this interaction stimulates GCN2 kinase activity in response to amino acid starvation. The GCN1-GCN20 complex interacts with GCN2 on translating ribosomes in amino acid-starved cells; this association stimulates GCN2 kinase activation by uncharged tRNAs, and hence allowing GCN4 translational activation and derepression of amino acid biosynthetic genes. Associates with ribosomes.

Its function is as follows. Acts as a positive activator of the GCN2 protein kinase activity in response to in response to low amino acid, carbon, or purine availability. Component of the GCN1-GCN20 complex that forms a complex with GCN2 on translating ribosomes; during this process, GCN20 helps GCN1 to act as a chaperone to facilitate delivery of uncharged tRNAs that enter the A site of ribosomes to the tRNA-binding domain of GCN2, and hence stimulating GCN2 kinase activity. Participates in gene-specific mRNA translation activation, such as the transcriptional activator GCN4, by promoting the GCN2-mediated phosphorylation of eukaryotic translation initiation factor 2 (eIF-2-alpha/SUI2) on 'Ser-52', and hence allowing GCN4-mediated reprogramming of amino acid biosynthetic gene expression to alleviate nutrient depletion. The polypeptide is Protein GCN20 (Saccharomyces cerevisiae (strain ATCC 204508 / S288c) (Baker's yeast)).